The chain runs to 385 residues: Homoserine O-succinyltransferase (385 aa).

In terms of domain architecture, AB hydrolase-1 spans Asn-45 to Asp-355. The active-site Nucleophile is the Ser-151. Arg-221 serves as a coordination point for substrate. Active-site residues include Asp-316 and His-349. Asp-350 provides a ligand contact to substrate.

It belongs to the AB hydrolase superfamily. MetX family. As to quaternary structure, homodimer.

It is found in the cytoplasm. The enzyme catalyses L-homoserine + succinyl-CoA = O-succinyl-L-homoserine + CoA. The protein operates within amino-acid biosynthesis; L-methionine biosynthesis via de novo pathway; O-succinyl-L-homoserine from L-homoserine: step 1/1. Transfers a succinyl group from succinyl-CoA to L-homoserine, forming succinyl-L-homoserine. The sequence is that of Homoserine O-succinyltransferase from Janthinobacterium sp. (strain Marseille) (Minibacterium massiliensis).